A 237-amino-acid chain; its full sequence is Ditrans,polycis-undecaprenyl-diphosphate synthase ((2E,6E)-farnesyl-diphosphate specific) (237 aa).

Asp-11 is an active-site residue. Asp-11 is a binding site for Mg(2+). Substrate contacts are provided by residues 12 to 15 (GNGR), Trp-16, Arg-24, His-28, and 56 to 58 (SIE). The active-site Proton acceptor is Asn-59. Substrate-binding positions include Arg-62, Arg-179, and 185–187 (RLS). Glu-198 provides a ligand contact to Mg(2+).

Belongs to the UPP synthase family. In terms of assembly, homodimer. Mg(2+) serves as cofactor.

The enzyme catalyses 8 isopentenyl diphosphate + (2E,6E)-farnesyl diphosphate = di-trans,octa-cis-undecaprenyl diphosphate + 8 diphosphate. In terms of biological role, catalyzes the sequential condensation of isopentenyl diphosphate (IPP) with (2E,6E)-farnesyl diphosphate (E,E-FPP) to yield (2Z,6Z,10Z,14Z,18Z,22Z,26Z,30Z,34E,38E)-undecaprenyl diphosphate (di-trans,octa-cis-UPP). UPP is the precursor of glycosyl carrier lipid in the biosynthesis of bacterial cell wall polysaccharide components such as peptidoglycan and lipopolysaccharide. This is Ditrans,polycis-undecaprenyl-diphosphate synthase ((2E,6E)-farnesyl-diphosphate specific) from Coxiella burnetii (strain RSA 493 / Nine Mile phase I).